Consider the following 599-residue polypeptide: Elongation factor 4 (599 aa).

Residues 2–184 (KNIRNFSIIA…RLVRDIPPPE (183 aa)) form the tr-type G domain. Residues 14-19 (DHGKST) and 131-134 (NKID) each bind GTP.

The protein belongs to the TRAFAC class translation factor GTPase superfamily. Classic translation factor GTPase family. LepA subfamily.

The protein localises to the cell inner membrane. The catalysed reaction is GTP + H2O = GDP + phosphate + H(+). Functionally, required for accurate and efficient protein synthesis under certain stress conditions. May act as a fidelity factor of the translation reaction, by catalyzing a one-codon backward translocation of tRNAs on improperly translocated ribosomes. Back-translocation proceeds from a post-translocation (POST) complex to a pre-translocation (PRE) complex, thus giving elongation factor G a second chance to translocate the tRNAs correctly. Binds to ribosomes in a GTP-dependent manner. The sequence is that of Elongation factor 4 from Klebsiella pneumoniae (strain 342).